Here is a 111-residue protein sequence, read N- to C-terminus: DNA-directed RNA polymerase subunit Rpo11 (111 aa).

Belongs to the archaeal Rpo11/eukaryotic RPB11/RPC19 RNA polymerase subunit family. As to quaternary structure, part of the RNA polymerase complex.

It is found in the cytoplasm. It catalyses the reaction RNA(n) + a ribonucleoside 5'-triphosphate = RNA(n+1) + diphosphate. DNA-dependent RNA polymerase (RNAP) catalyzes the transcription of DNA into RNA using the four ribonucleoside triphosphates as substrates. The protein is DNA-directed RNA polymerase subunit Rpo11 of Thermoplasma volcanium (strain ATCC 51530 / DSM 4299 / JCM 9571 / NBRC 15438 / GSS1).